The sequence spans 283 residues: MQPTLAPAPHPSMQTSAQDHADQVLHDQLLAAHQHLSHPQQARPQGPTAQPPHMQPNTTSPRDQNNIDPAISGAAMLSGPPQTPPQPEPTGQESPKTYGKRPLSTSKRAAQNRAAQRAFRQRKESYIRKLEEQVKEFDNTNETMKQLQAENYQLREYIINLQSRLLDSQGEVPELPGNIDLNQPRNDISVPPPGAPAATGPAPGPGGAPQQMQVPNPGAATNEDMNSLNRIAVAGLGMRKHPNEEANFLGNNFQARRPRNDDGQPDGSEATKTEPGHGLPVVS.

The segment covering 1 to 10 (MQPTLAPAPH) has biased composition (pro residues). A disordered region spans residues 1–121 (MQPTLAPAPH…NRAAQRAFRQ (121 aa)). Residues 26 to 42 (HDQLLAAHQHLSHPQQA) are compositionally biased toward low complexity. Positions 55-67 (QPNTTSPRDQNNI) are enriched in polar residues. The 64-residue stretch at 102 to 165 (PLSTSKRAAQ…EYIINLQSRL (64 aa)) folds into the bZIP domain. Residues 103–126 (LSTSKRAAQNRAAQRAFRQRKESY) are basic motif. The span at 108–118 (RAAQNRAAQRA) shows a compositional bias: low complexity. The interval 130-161 (LEEQVKEFDNTNETMKQLQAENYQLREYIINL) is leucine-zipper. A disordered region spans residues 178-283 (NIDLNQPRND…EPGHGLPVVS (106 aa)).

The protein belongs to the bZIP family.

It localises to the nucleus. In terms of biological role, putative transcription factor. The sequence is that of Putative transcription factor kapC (kapC) from Aspergillus niger (strain ATCC MYA-4892 / CBS 513.88 / FGSC A1513).